The sequence spans 354 residues: Zinc finger protein 346 (354 aa).

4 consecutive Matrin-type zinc fingers follow at residues 34–64 (TQCK…KVRR), 95–125 (KCCP…NLRL), 165–195 (KFCK…QETK), and 232–262 (FSCD…QLMS). Zn(2+) contacts are provided by C36, C39, H52, H58, C97, C100, H113, and H119. Residues 263–343 (MTPLSKEGPP…QPYVREDMMG (81 aa)) are disordered. 2 stretches are compositionally biased toward low complexity: residues 270-289 (GPPA…TGGA) and 310-323 (GPSS…MGGL). A compositionally biased stretch (pro residues) spans 324 to 333 (MPPPYPPPHS).

The protein resides in the nucleus. The protein localises to the cytoplasm. Binds preferentially to dsRNA, but also to RNA-DNA hybrids. The sequence is that of Zinc finger protein 346 from Xenopus tropicalis (Western clawed frog).